The sequence spans 37 residues: Large ribosomal subunit protein bL36 (37 aa).

Belongs to the bacterial ribosomal protein bL36 family.

This is Large ribosomal subunit protein bL36 from Acidothermus cellulolyticus (strain ATCC 43068 / DSM 8971 / 11B).